The sequence spans 260 residues: Global transcriptional regulator CodY (260 aa).

The tract at residues 1-159 is GAF domain; it reads MPNLLEKTRK…SSTVVGIQLL (159 aa). The H-T-H motif DNA-binding region spans 207-226; the sequence is ASVIADRIGITRSVIVNALR.

This sequence belongs to the CodY family.

The protein localises to the cytoplasm. DNA-binding global transcriptional regulator which is involved in the adaptive response to starvation and acts by directly or indirectly controlling the expression of numerous genes in response to nutrient availability. During rapid exponential growth, CodY is highly active and represses genes whose products allow adaptation to nutrient depletion. This Streptococcus pyogenes serotype M1 protein is Global transcriptional regulator CodY.